The chain runs to 884 residues: Exocyst complex component 2 (884 aa).

Basic and acidic residues predominate over residues 1–11; sequence MEENAQARERL. Residues 1 to 27 are disordered; that stretch reads MEENAQARERLPPTVTGLSPTEGVPGT. The 86-residue stretch at 13-98 folds into the IPT/TIG domain; sequence PTVTGLSPTE…GSSNVKFRVF (86 aa). Coiled coils occupy residues 178–206 and 846–874; these read ADATIEDLRIAIKNMELSKQNEAKRSEEM and NQRLQQCLKNMRTTMRMALQSLEQHAENL.

This sequence belongs to the SEC5 family. The exocyst complex is composed of sec-3/exoc1, sec-5/exoc2, sec-6/exoc3, sec-8/exoc4, sec-10/exoc5, sec-15/exoc6, exo-70/exoc7 and exo-84/exoc8.

Functionally, component of the exocyst complex involved in the docking of exocytic vesicles with fusion sites on the plasma membrane. The sequence is that of Exocyst complex component 2 (sec-5) from Caenorhabditis elegans.